Here is a 259-residue protein sequence, read N- to C-terminus: uncharacterized protein (259 aa).

Positions 4 to 248 (LQTTNLSKTY…SILDTLSVLG (245 aa)) constitute an ABC transporter domain. An ATP-binding site is contributed by 42–49 (GPSGSGKT).

This sequence belongs to the ABC transporter superfamily.

This is an uncharacterized protein from Bacillus subtilis (strain 168).